The following is a 436-amino-acid chain: Cyclin-dependent kinase 11B (436 aa).

Residues Val-25–Lys-30 carry the Nuclear localization signal motif. The interval Lys-30–Glu-44 is calmodulin-binding. Residues Phe-79–Phe-364 form the Protein kinase domain. ATP is bound by residues Ile-85–Val-93 and Lys-108. A Phosphoserine; by CDK7 modification is found at Ser-123. Phosphothreonine; by CDK7 is present on Thr-129. The active-site Proton acceptor is Asp-203. The residue at position 230 (Ser-230) is a Phosphoserine. Tyr-235 carries the post-translational modification Phosphotyrosine. Position 236 is a phosphothreonine (Thr-236). Lys-282 participates in a covalent cross-link: Glycyl lysine isopeptide (Lys-Gly) (interchain with G-Cter in SUMO2). The tract at residues Ser-383–Leu-406 is disordered. Position 392 is a phosphothreonine (Thr-392). Ser-393 bears the Phosphoserine mark.

This sequence belongs to the protein kinase superfamily. CMGC Ser/Thr protein kinase family. CDC2/CDKX subfamily. In terms of assembly, may interact PAK1 and RANBP9. p110C interacts with RNPS1. Interacts with CCND3. Interacts with CCNL1 and CCNL2. Forms complexes with pre-mRNA-splicing factors, including at least SRSF1, SRSF2 AND SRSF7/SLU7. Mg(2+) serves as cofactor.

The protein resides in the cytoplasm. It is found in the nucleus membrane. The protein localises to the endomembrane system. It localises to the perinuclear region. The catalysed reaction is L-seryl-[protein] + ATP = O-phospho-L-seryl-[protein] + ADP + H(+). It carries out the reaction L-threonyl-[protein] + ATP = O-phospho-L-threonyl-[protein] + ADP + H(+). In terms of biological role, plays multiple roles in cell cycle progression, cytokinesis and apoptosis. Involved in pre-mRNA splicing in a kinase activity-dependent manner. May act as a negative regulator of normal cell cycle progression. This chain is Cyclin-dependent kinase 11B (Cdk11b), found in Rattus norvegicus (Rat).